The primary structure comprises 490 residues: Acetyl-coenzyme A carboxylase carboxyl transferase subunit beta, chloroplastic (490 aa).

The segment at 184–203 (LNSSENEGSSRRTRTKGSDL) is disordered. Positions 221–490 (LWVQCENCYG…PLNQKSSKIK (270 aa)) constitute a CoA carboxyltransferase N-terminal domain. Residues Cys225, Cys228, Cys244, and Cys247 each contribute to the Zn(2+) site. The segment at 225–247 (CENCYGLNYKKFLKSKMNICEQC) adopts a C4-type zinc-finger fold.

The protein belongs to the AccD/PCCB family. Acetyl-CoA carboxylase is a heterohexamer composed of biotin carboxyl carrier protein, biotin carboxylase and 2 subunits each of ACCase subunit alpha and ACCase plastid-coded subunit beta (accD). It depends on Zn(2+) as a cofactor. RNA expressed in leaf, root, stem, and tuber; the least expression occurs in stems. RNA persists even in senescent leaves.

Its subcellular location is the plastid. It is found in the chloroplast stroma. It catalyses the reaction N(6)-carboxybiotinyl-L-lysyl-[protein] + acetyl-CoA = N(6)-biotinyl-L-lysyl-[protein] + malonyl-CoA. It participates in lipid metabolism; malonyl-CoA biosynthesis; malonyl-CoA from acetyl-CoA: step 1/1. Functionally, component of the acetyl coenzyme A carboxylase (ACC) complex. Biotin carboxylase (BC) catalyzes the carboxylation of biotin on its carrier protein (BCCP) and then the CO(2) group is transferred by the transcarboxylase to acetyl-CoA to form malonyl-CoA. The chain is Acetyl-coenzyme A carboxylase carboxyl transferase subunit beta, chloroplastic from Solanum tuberosum (Potato).